Here is a 439-residue protein sequence, read N- to C-terminus: Serine hydroxymethyltransferase (439 aa).

Residues Leu-119 and 123–125 (GHL) contribute to the (6S)-5,6,7,8-tetrahydrofolate site. Lys-228 bears the N6-(pyridoxal phosphate)lysine mark. 370 to 372 (SPF) contacts (6S)-5,6,7,8-tetrahydrofolate.

The protein belongs to the SHMT family. Homodimer. It depends on pyridoxal 5'-phosphate as a cofactor.

It localises to the cytoplasm. It carries out the reaction (6R)-5,10-methylene-5,6,7,8-tetrahydrofolate + glycine + H2O = (6S)-5,6,7,8-tetrahydrofolate + L-serine. It functions in the pathway one-carbon metabolism; tetrahydrofolate interconversion. It participates in amino-acid biosynthesis; glycine biosynthesis; glycine from L-serine: step 1/1. Catalyzes the reversible interconversion of serine and glycine with tetrahydrofolate (THF) serving as the one-carbon carrier. This reaction serves as the major source of one-carbon groups required for the biosynthesis of purines, thymidylate, methionine, and other important biomolecules. Also exhibits THF-independent aldolase activity toward beta-hydroxyamino acids, producing glycine and aldehydes, via a retro-aldol mechanism. In Chlorobium phaeobacteroides (strain BS1), this protein is Serine hydroxymethyltransferase.